The sequence spans 282 residues: Ribosomal RNA small subunit methyltransferase A (282 aa).

Residues His-11, Leu-13, Gly-44, Glu-65, Asp-90, and Asn-106 each coordinate S-adenosyl-L-methionine.

Belongs to the class I-like SAM-binding methyltransferase superfamily. rRNA adenine N(6)-methyltransferase family. RsmA subfamily.

The protein localises to the cytoplasm. The enzyme catalyses adenosine(1518)/adenosine(1519) in 16S rRNA + 4 S-adenosyl-L-methionine = N(6)-dimethyladenosine(1518)/N(6)-dimethyladenosine(1519) in 16S rRNA + 4 S-adenosyl-L-homocysteine + 4 H(+). Functionally, specifically dimethylates two adjacent adenosines (A1518 and A1519) in the loop of a conserved hairpin near the 3'-end of 16S rRNA in the 30S particle. May play a critical role in biogenesis of 30S subunits. The protein is Ribosomal RNA small subunit methyltransferase A of Synechococcus sp. (strain JA-2-3B'a(2-13)) (Cyanobacteria bacterium Yellowstone B-Prime).